Consider the following 667-residue polypeptide: WD repeat-containing protein 48 homolog (667 aa).

WD repeat units follow at residues 26–65 (QHRN…NDKY), 71–110 (HHND…CMST), 113–152 (THRD…ALTA), 164–203 (GSKD…RSMK), 206–245 (GHTE…CIQT), 248–287 (VHKE…NKML), 290–329 (EEKA…RCTL), and 349–388 (KGGA…KKEE). Residues 591 to 615 (ETTPSGGNANNSLQNSQSDANSEGS) are disordered.

The protein belongs to the WD repeat WDR48 family. As to quaternary structure, catalytic component of the Usp12-46 deubiquitylase complex consisting of Usp12-46, Wdr20 and Uaf1; regulatory subunit that, together wtih Wdr20, stabilizes Usp12-46. The Usp12-46 deubiquitylase complex associates with arr/arrow; the interaction leads to deubiquitination and stabilization of arr/arrow.

Its function is as follows. Regulatory component of the Usp12-46 deubiquitylase complex. activates deubiquitination by increasing the catalytic turnover without increasing the affinity of deubiquitinating enzymes for the substrate. The complex deubiquitylates the wg/wingless-signaling receptor arr/arrow, which stabilizes the receptor and increases its concentration at the cell surface; this enhances the sensitivity of cells to wg/wingless-signal stimulation. This increases the amplitude and spatial range of the signaling response to the wg/wingless morphogen gradient, facilitating the precise concentration-dependent regulation of its target genes. Together with Wdr20 and Usp12-46 required for wg/wingless-mediated signaling in the wing imaginal disc and for wg/wingless-dependent regulation of intestinal stem cell proliferation. This Drosophila virilis (Fruit fly) protein is WD repeat-containing protein 48 homolog.